A 218-amino-acid polypeptide reads, in one-letter code: MNPNPFLPRKALSPTALNQNLATHRRRPKSKNWTSVNKIKYDSELLLQYLYEGFGADRPYSDINVIKVYKVKVKKTGASILAHYFAHVSTSTGYEFEFHPGSQPRTFQTVHTDGLIIKVHIMCDACCKAELRRYIEGENGFNVAFRNCESILCRRVSFQTLLLGSVILLLLFNVENFSALNLLVILLILLALFCHNNYIISNPHVVFCNHKNALKNHE.

This is an uncharacterized protein from Orgyia pseudotsugata multicapsid polyhedrosis virus (OpMNPV).